Reading from the N-terminus, the 68-residue chain is Large ribosomal subunit protein uL30 (68 aa).

It belongs to the universal ribosomal protein uL30 family. As to quaternary structure, part of the 50S ribosomal subunit.

The chain is Large ribosomal subunit protein uL30 from Kocuria rhizophila (strain ATCC 9341 / DSM 348 / NBRC 103217 / DC2201).